Reading from the N-terminus, the 334-residue chain is tRNA U34 carboxymethyltransferase (334 aa).

Residues lysine 91, tryptophan 105, lysine 110, glycine 130, 152 to 154 (DPT), 181 to 182 (IE), methionine 196, tyrosine 200, and arginine 315 contribute to the carboxy-S-adenosyl-L-methionine site.

Belongs to the class I-like SAM-binding methyltransferase superfamily. CmoB family. As to quaternary structure, homotetramer.

The enzyme catalyses carboxy-S-adenosyl-L-methionine + 5-hydroxyuridine(34) in tRNA = 5-carboxymethoxyuridine(34) in tRNA + S-adenosyl-L-homocysteine + H(+). Functionally, catalyzes carboxymethyl transfer from carboxy-S-adenosyl-L-methionine (Cx-SAM) to 5-hydroxyuridine (ho5U) to form 5-carboxymethoxyuridine (cmo5U) at position 34 in tRNAs. The polypeptide is tRNA U34 carboxymethyltransferase (Klebsiella pneumoniae (strain 342)).